Here is a 440-residue protein sequence, read N- to C-terminus: Enolase (440 aa).

Residue Gln-168 participates in (2R)-2-phosphoglycerate binding. Glu-210 serves as the catalytic Proton donor. Mg(2+)-binding residues include Asp-249, Glu-300, and Asp-326. 4 residues coordinate (2R)-2-phosphoglycerate: Lys-351, Arg-380, Ser-381, and Lys-402. Lys-351 serves as the catalytic Proton acceptor.

The protein belongs to the enolase family. It depends on Mg(2+) as a cofactor.

It localises to the cytoplasm. The protein resides in the secreted. The protein localises to the cell surface. The catalysed reaction is (2R)-2-phosphoglycerate = phosphoenolpyruvate + H2O. The protein operates within carbohydrate degradation; glycolysis; pyruvate from D-glyceraldehyde 3-phosphate: step 4/5. In terms of biological role, catalyzes the reversible conversion of 2-phosphoglycerate (2-PG) into phosphoenolpyruvate (PEP). It is essential for the degradation of carbohydrates via glycolysis. The protein is Enolase of Ureaplasma parvum serovar 3 (strain ATCC 27815 / 27 / NCTC 11736).